Here is a 244-residue protein sequence, read N- to C-terminus: Nuclear protein UL4 homolog (244 aa).

Residues 193–227 (RPDDQTTPTPTPHQYTSQRRQPETNCPSSPQPAFF) form a disordered region. A compositionally biased stretch (polar residues) spans 205-220 (HQYTSQRRQPETNCPS).

The protein belongs to the alphaherpesvirinae HHV-1 UL4 family.

It is found in the host nucleus. The chain is Nuclear protein UL4 homolog from Varicella-zoster virus (strain Dumas) (HHV-3).